The primary structure comprises 556 residues: Peptidylarginine deiminase (556 aa).

The N-terminal stretch at 1–23 (MKKLLQAKALILALGLFQLPAIA) is a signal peptide. The propeptide occupies 24–43 (QTQMQADRTNGQFATEEMQR). The active-site Amidino-cysteine intermediate is Cys-351.

Belongs to the agmatine deiminase family. FAD serves as cofactor. FMN is required as a cofactor.

The protein localises to the secreted. Its activity is regulated as follows. Inhibited by cysteine and TLCK. Inhibited by high concentration of thiourea and thio-L-citrulline. Its function is as follows. Deiminates the guanidino group of C-terminal arginine residues on a variety of peptides, including the vasoregulatory peptide-hormone bradykinin, to yield ammonia and a citrulline residue. May promote the growth of the pathogen in the periodontal pocket by producing ammonia, ammonia having a protective effect during acidic cleaning cycles in the mouth. The chain is Peptidylarginine deiminase from Porphyromonas gingivalis (strain ATCC BAA-308 / W83).